The sequence spans 464 residues: MSTDKTNQSWGGRFSEPVDAFVARFTASVTFDQRLYRHDIMGSIAHATMLAKVGVLTDAERDTIVDGLNTIQAEIEAGNFEWRVDLEDVHMNIEARLTDRIGITGKKLHTGRSRNDQVATDIRLWLRDEIDLILSEITRLQKGLLVQAERESDTIMPGFTHLQTAQPVTFGHHMLAWFEMLSRDYERLVDCRKRLNRMPLGSAALAGTTYPIDRELTCKLLGFDVVGGNSLDGVSDRDFAIEFCSAASIAMMHLSRFSEELVLWTSAQFQFIDLPDRFCTGSSIMPQKKNPDVPELVRGKSGRVFGALMGLLTLMKGQPLAYNKDNQEDKEPLFDAADTLRDSLRAFADMIPAIKPRHAIMREAALRGFSTATDLADYLVRRGLPFRDCHEIVGHAVKYGVETGKDLAEMSLEELRQFSNQIEQDVFAVLTLEGSVNARNHVGGTAPEQVRAAVARGQELLAGR.

This sequence belongs to the lyase 1 family. Argininosuccinate lyase subfamily.

It localises to the cytoplasm. The catalysed reaction is 2-(N(omega)-L-arginino)succinate = fumarate + L-arginine. It functions in the pathway amino-acid biosynthesis; L-arginine biosynthesis; L-arginine from L-ornithine and carbamoyl phosphate: step 3/3. This Pseudomonas syringae pv. tomato (strain ATCC BAA-871 / DC3000) protein is Argininosuccinate lyase.